We begin with the raw amino-acid sequence, 257 residues long: Auxin-responsive protein IAA17 (257 aa).

Disordered regions lie at residues 1 to 51 (MSPP…PAAT) and 85 to 119 (GKKA…QVVG). Positions 33–37 (LRLGL) match the EAR-like (transcriptional repression) motif. Low complexity predominate over residues 105–118 (AAAPQAPAAKAQVV). The PB1 domain occupies 151–239 (FLYVKVSMDG…SCRRLRIMKG (89 aa)).

This sequence belongs to the Aux/IAA family. In terms of assembly, homodimers and heterodimers. In terms of tissue distribution, highly expressed in etiolated seedlings and flowers. Expressed in roots and green seedlings.

Its subcellular location is the nucleus. Its function is as follows. Aux/IAA proteins are short-lived transcriptional factors that function as repressors of early auxin response genes at low auxin concentrations. The sequence is that of Auxin-responsive protein IAA17 (IAA17) from Oryza sativa subsp. japonica (Rice).